A 324-amino-acid chain; its full sequence is N-acetyl-gamma-glutamyl-phosphate reductase (324 aa).

The active site involves cysteine 131.

This sequence belongs to the NAGSA dehydrogenase family. Type 1 subfamily.

The protein resides in the cytoplasm. The enzyme catalyses N-acetyl-L-glutamate 5-semialdehyde + phosphate + NADP(+) = N-acetyl-L-glutamyl 5-phosphate + NADPH + H(+). The protein operates within amino-acid biosynthesis; L-arginine biosynthesis; N(2)-acetyl-L-ornithine from L-glutamate: step 3/4. Its function is as follows. Catalyzes the NADPH-dependent reduction of N-acetyl-5-glutamyl phosphate to yield N-acetyl-L-glutamate 5-semialdehyde. The protein is N-acetyl-gamma-glutamyl-phosphate reductase of Bradyrhizobium sp. (strain BTAi1 / ATCC BAA-1182).